The sequence spans 2290 residues: Autophagy-related protein 2 (2290 aa).

In terms of domain architecture, Chorein N-terminal spans 10 to 99 (WCKVMLQRYM…MCIEDLQLTF (90 aa)). Positions 829-1549 (DSMMKSVSAD…PNRDHSAFVV (721 aa)) are required for epg-6 binding. Disordered stretches follow at residues 1678 to 1727 (IGSK…LGDL), 1805 to 1851 (DDLF…DLTG), 1898 to 1919 (SETE…PARN), and 1967 to 2003 (EHGN…ERNK). Residues 1681 to 1692 (KKTTPKTSVSSS) are compositionally biased toward low complexity. The span at 1714-1723 (RPSPVQPPTP) shows a compositional bias: pro residues. Residues 1810–1830 (QSYSSSSSETESESSAPQSSQ) are compositionally biased toward low complexity. Residues 1972 to 2011 (LDSIDNEDDNEKQKIEEEMEEDEKEEEEERNKEIQEAVER) are a coiled coil. Acidic residues predominate over residues 1988-1999 (EEMEEDEKEEEE).

It belongs to the ATG2 family. As to quaternary structure, interacts with epg-6; the interaction is direct.

Its subcellular location is the preautophagosomal structure membrane. The protein resides in the lipid droplet. It is found in the endoplasmic reticulum membrane. It localises to the cytoplasm. The catalysed reaction is a 1,2-diacyl-sn-glycero-3-phospho-L-serine(in) = a 1,2-diacyl-sn-glycero-3-phospho-L-serine(out). It catalyses the reaction a 1,2-diacyl-sn-glycero-3-phosphoethanolamine(in) = a 1,2-diacyl-sn-glycero-3-phosphoethanolamine(out). Functionally, lipid transfer protein involved in autophagosome assembly and in the distribution of atg-9 and atg-13 during the autophagy-mediated degradation of protein aggregates. Tethers the edge of the isolation membrane (IM) to the endoplasmic reticulum (ER) and mediates direct lipid transfer from ER to IM for IM expansion. Binds to the ER exit site (ERES), which is the membrane source for autophagosome formation, and extracts phospholipids from the membrane source to the IM for membrane expansion. Involved in autophagy-mediated degradation of ribosomal RNA and ribosomal proteins in lysosomes, which is essential for maintaining nucleotide homeostasis. The protein is Autophagy-related protein 2 of Caenorhabditis elegans.